Consider the following 235-residue polypeptide: Transcriptional regulatory protein MalR (235 aa).

The 117-residue stretch at 3–119 (NVLIVEDDPM…RFQTALSDYR (117 aa)) folds into the Response regulatory domain. Asp54 is subject to 4-aspartylphosphate. Residues 178–197 (TEDLAKHTEISQVSIRKYLK) constitute a DNA-binding region (H-T-H motif).

Post-translationally, phosphorylated and activated by MalK.

The protein resides in the cytoplasm. Its function is as follows. Member of a two-component regulatory system MalK/MalR. Activates transcription of maeA, maeN and yflS in presence of malate by binding to their promoter region. The protein is Transcriptional regulatory protein MalR (malR) of Bacillus subtilis (strain 168).